Reading from the N-terminus, the 128-residue chain is Large ribosomal subunit protein mL55 (128 aa).

Residues 1-33 (MAAVGSLLGRLRQSTVKATGPALRRLHTSSWRA) constitute a mitochondrion transit peptide. Ser85 is subject to Phosphoserine.

It belongs to the mitochondrion-specific ribosomal protein mL55 family. Component of the mitochondrial large ribosomal subunit (mt-LSU). Mature mammalian 55S mitochondrial ribosomes consist of a small (28S) and a large (39S) subunit. The 28S small subunit contains a 12S ribosomal RNA (12S mt-rRNA) and 30 different proteins. The 39S large subunit contains a 16S rRNA (16S mt-rRNA), a copy of mitochondrial valine transfer RNA (mt-tRNA(Val)), which plays an integral structural role, and 52 different proteins.

It is found in the mitochondrion. This chain is Large ribosomal subunit protein mL55 (MRPL55), found in Homo sapiens (Human).